The chain runs to 608 residues: Glutamyl-tRNA(Gln) amidotransferase subunit E (608 aa).

The protein belongs to the GatB/GatE family. GatE subfamily. As to quaternary structure, heterodimer of GatD and GatE.

It catalyses the reaction L-glutamyl-tRNA(Gln) + L-glutamine + ATP + H2O = L-glutaminyl-tRNA(Gln) + L-glutamate + ADP + phosphate + H(+). Functionally, allows the formation of correctly charged Gln-tRNA(Gln) through the transamidation of misacylated Glu-tRNA(Gln) in organisms which lack glutaminyl-tRNA synthetase. The reaction takes place in the presence of glutamine and ATP through an activated gamma-phospho-Glu-tRNA(Gln). The GatDE system is specific for glutamate and does not act on aspartate. This chain is Glutamyl-tRNA(Gln) amidotransferase subunit E, found in Pyrobaculum aerophilum (strain ATCC 51768 / DSM 7523 / JCM 9630 / CIP 104966 / NBRC 100827 / IM2).